The sequence spans 644 residues: Core protein VP4 (644 aa).

This sequence belongs to the orbivirus VP4 family.

It is found in the virion. The VP4 protein is one of the five proteins (with VP1, VP3, VP6 and VP7) which form the inner capsid of the virus. The sequence is that of Core protein VP4 (Segment-4) from Bluetongue virus 2 (isolate USA) (BTV 2).